The following is a 149-amino-acid chain: Large ribosomal subunit protein bL9 (149 aa).

This sequence belongs to the bacterial ribosomal protein bL9 family.

Its function is as follows. Binds to the 23S rRNA. The protein is Large ribosomal subunit protein bL9 of Xanthomonas campestris pv. campestris (strain 8004).